A 78-amino-acid polypeptide reads, in one-letter code: Small ribosomal subunit protein bS16c (78 aa).

The protein belongs to the bacterial ribosomal protein bS16 family.

The protein localises to the plastid. It is found in the chloroplast. The chain is Small ribosomal subunit protein bS16c from Daucus carota (Wild carrot).